A 278-amino-acid chain; its full sequence is HTH-type transcriptional activator RhaS (278 aa).

The 99-residue stretch at 174–272 folds into the HTH araC/xylS-type domain; sequence NLLLAWLEDH…NWSPRDIRQG (99 aa). DNA-binding regions (H-T-H motif) lie at residues 191–212 and 239–262; these read DAVADQFSLSLRTLHRQLKQQT and VTDIAYRCGFSDSNHFSTLFRREF.

As to quaternary structure, binds DNA as a dimer.

Its subcellular location is the cytoplasm. Activates expression of the rhaBAD and rhaT operons. The polypeptide is HTH-type transcriptional activator RhaS (Shigella dysenteriae serotype 1 (strain Sd197)).